Reading from the N-terminus, the 122-residue chain is Prefoldin subunit 1 (122 aa).

Residue alanine 2 is modified to N-acetylalanine.

This sequence belongs to the prefoldin subunit beta family. Heterohexamer of two PFD-alpha type and four PFD-beta type subunits.

Functionally, binds specifically to cytosolic chaperonin (c-CPN) and transfers target proteins to it. Binds to nascent polypeptide chain and promotes folding in an environment in which there are many competing pathways for nonnative proteins. This Homo sapiens (Human) protein is Prefoldin subunit 1 (PFDN1).